The sequence spans 379 residues: Cytochrome b (379 aa).

4 helical membrane-spanning segments follow: residues 33–53 (FGSLLGMCLVIQILTGLFLAM), 77–98 (WLIRYLHANGASMFFICLFIHV), 113–133 (WNIGIILLLTTMATAFVGYVL), and 178–198 (FFAFHFILPFIIAAFALVHLL). The heme b site is built by His-83 and His-97. Residues His-182 and His-196 each contribute to the heme b site. His-201 is a binding site for a ubiquinone. A run of 4 helical transmembrane segments spans residues 226-246 (TKDLLGIFLLLLVLMILALFF), 288-308 (LGGVLALVLSILILAAFPLLN), 320-340 (VTQVIYWIFIANLLVLTWIGG), and 347-367 (FTTIGQIASVTYFATIIILIP).

This sequence belongs to the cytochrome b family. In terms of assembly, the cytochrome bc1 complex contains 11 subunits: 3 respiratory subunits (MT-CYB, CYC1 and UQCRFS1), 2 core proteins (UQCRC1 and UQCRC2) and 6 low-molecular weight proteins (UQCRH/QCR6, UQCRB/QCR7, UQCRQ/QCR8, UQCR10/QCR9, UQCR11/QCR10 and a cleavage product of UQCRFS1). This cytochrome bc1 complex then forms a dimer. Requires heme b as cofactor.

The protein localises to the mitochondrion inner membrane. In terms of biological role, component of the ubiquinol-cytochrome c reductase complex (complex III or cytochrome b-c1 complex) that is part of the mitochondrial respiratory chain. The b-c1 complex mediates electron transfer from ubiquinol to cytochrome c. Contributes to the generation of a proton gradient across the mitochondrial membrane that is then used for ATP synthesis. The polypeptide is Cytochrome b (MT-CYB) (Akodon montensis (Montane grass mouse)).